The following is an 807-amino-acid chain: Ecotropic viral integration site 5 ortholog (807 aa).

The disordered stretch occupies residues 1–31; sequence MTLTTTTTASSAESQAKMDVKGGALPGEENL. Thr-33 bears the Phosphothreonine mark. A phosphoserine mark is found at Ser-58 and Ser-64. One can recognise a Rab-GAP TBC domain in the interval 116-300; that stretch reads GIPHHFRAIV…RIMDVFLSEG (185 aa). 3 coiled-coil regions span residues 352-463, 494-583, and 627-772; these read SIKL…ENNV, CLLE…ENQR, and REME…RGKF.

In terms of assembly, interacts with Rab11.

It is found in the cytoplasm. The protein localises to the endosome. Functionally, functions as a GTPase-activating protein (GAP). During border cell migration in the ovary, acts as a GAP for Rab11 and is necessary for the maintenance of active receptor tyrosine kinases at the leading edge. This chain is Ecotropic viral integration site 5 ortholog (Evi5), found in Drosophila melanogaster (Fruit fly).